We begin with the raw amino-acid sequence, 487 residues long: ATP synthase subunit beta (487 aa).

164-171 (GGAGVGKT) provides a ligand contact to ATP.

This sequence belongs to the ATPase alpha/beta chains family. F-type ATPases have 2 components, CF(1) - the catalytic core - and CF(0) - the membrane proton channel. CF(1) has five subunits: alpha(3), beta(3), gamma(1), delta(1), epsilon(1). CF(0) has four main subunits: a(1), b(1), b'(1) and c(9-12).

The protein localises to the cellular thylakoid membrane. It catalyses the reaction ATP + H2O + 4 H(+)(in) = ADP + phosphate + 5 H(+)(out). In terms of biological role, produces ATP from ADP in the presence of a proton gradient across the membrane. The catalytic sites are hosted primarily by the beta subunits. The chain is ATP synthase subunit beta from Synechococcus sp. (strain WH7803).